Reading from the N-terminus, the 122-residue chain is Large ribosomal subunit protein uL14 (122 aa).

Belongs to the universal ribosomal protein uL14 family. As to quaternary structure, part of the 50S ribosomal subunit. Forms a cluster with proteins L3 and L19. In the 70S ribosome, L14 and L19 interact and together make contacts with the 16S rRNA in bridges B5 and B8.

Binds to 23S rRNA. Forms part of two intersubunit bridges in the 70S ribosome. The chain is Large ribosomal subunit protein uL14 from Streptomyces avermitilis (strain ATCC 31267 / DSM 46492 / JCM 5070 / NBRC 14893 / NCIMB 12804 / NRRL 8165 / MA-4680).